We begin with the raw amino-acid sequence, 430 residues long: Enolase (430 aa).

(2R)-2-phosphoglycerate is bound at residue Gln167. The active-site Proton donor is the Glu209. Positions 246, 289, and 316 each coordinate Mg(2+). (2R)-2-phosphoglycerate-binding residues include Lys341, Arg370, Ser371, and Lys392. Catalysis depends on Lys341, which acts as the Proton acceptor.

This sequence belongs to the enolase family. As to quaternary structure, component of the RNA degradosome, a multiprotein complex involved in RNA processing and mRNA degradation. Requires Mg(2+) as cofactor.

Its subcellular location is the cytoplasm. The protein resides in the secreted. The protein localises to the cell surface. It carries out the reaction (2R)-2-phosphoglycerate = phosphoenolpyruvate + H2O. Its pathway is carbohydrate degradation; glycolysis; pyruvate from D-glyceraldehyde 3-phosphate: step 4/5. In terms of biological role, catalyzes the reversible conversion of 2-phosphoglycerate (2-PG) into phosphoenolpyruvate (PEP). It is essential for the degradation of carbohydrates via glycolysis. This chain is Enolase, found in Idiomarina loihiensis (strain ATCC BAA-735 / DSM 15497 / L2-TR).